The sequence spans 121 residues: Large ribosomal subunit protein bL20 (121 aa).

The protein belongs to the bacterial ribosomal protein bL20 family.

Binds directly to 23S ribosomal RNA and is necessary for the in vitro assembly process of the 50S ribosomal subunit. It is not involved in the protein synthesizing functions of that subunit. The chain is Large ribosomal subunit protein bL20 from Wolbachia pipientis subsp. Culex pipiens (strain wPip).